A 55-amino-acid chain; its full sequence is Ribulose bisphosphate carboxylase large chain (55 aa).

Catalysis depends on histidine 18, which acts as the Proton acceptor. Substrate contacts are provided by arginine 19 and histidine 27.

Belongs to the RuBisCO large chain family. Type I subfamily. As to quaternary structure, heterohexadecamer of 8 large chains and 8 small chains; disulfide-linked. The disulfide link is formed within the large subunit homodimers. It depends on Mg(2+) as a cofactor. In terms of processing, the disulfide bond which can form in the large chain dimeric partners within the hexadecamer appears to be associated with oxidative stress and protein turnover.

Its subcellular location is the plastid. It localises to the chloroplast. The enzyme catalyses 2 (2R)-3-phosphoglycerate + 2 H(+) = D-ribulose 1,5-bisphosphate + CO2 + H2O. It carries out the reaction D-ribulose 1,5-bisphosphate + O2 = 2-phosphoglycolate + (2R)-3-phosphoglycerate + 2 H(+). In terms of biological role, ruBisCO catalyzes two reactions: the carboxylation of D-ribulose 1,5-bisphosphate, the primary event in carbon dioxide fixation, as well as the oxidative fragmentation of the pentose substrate in the photorespiration process. Both reactions occur simultaneously and in competition at the same active site. The sequence is that of Ribulose bisphosphate carboxylase large chain from Vitis sp. (Grape).